A 197-amino-acid polypeptide reads, in one-letter code: MSASRFIKCVTVGDGAVGKTCLLISYTSNTFPTDYVPTVFDNFSANVVVNGSTVNLGLWDTAGQEDYNRLRPLSYRGADVFILAFSLISKASYENVSKKWIPELKHYAPGVPIILVGTKLDLRDDKQFFVDHPGAVPITTAQGEELRKLINAPAYIECSSKSQQNVKAVFDAAIRVVLQPPKQKKKKSKAQKACSIL.

13 to 20 (GDGAVGKT) is a binding site for GTP. The short motif at 35-43 (YVPTVFDNF) is the Effector region element. GTP is bound by residues 60–64 (DTAGQ) and 118–121 (TKLD). At Cys-194 the chain carries Cysteine methyl ester. The S-geranylgeranyl cysteine moiety is linked to residue Cys-194. The propeptide at 195-197 (SIL) is removed in mature form.

It belongs to the small GTPase superfamily. Rho family. In terms of tissue distribution, expressed at the tip of pollen tubes.

The protein localises to the cytoplasm. It is found in the membrane. In terms of biological role, inactive GDP-bound Rho GTPases reside in the cytosol, are found in a complex with Rho GDP-dissociation inhibitors (Rho GDIs), and are released from the GDI protein in order to translocate to membranes upon activation. May be involved in cell polarity control during the actin-dependent tip growth of pollen tubes. The chain is Rac-like GTP-binding protein RHO1 (RHO1) from Pisum sativum (Garden pea).